Here is a 375-residue protein sequence, read N- to C-terminus: Queuine tRNA-ribosyltransferase (375 aa).

Asp90 functions as the Proton acceptor in the catalytic mechanism. Substrate is bound by residues 90–94 (DSGGF), Asp144, Gln190, and Gly217. The segment at 248-254 (GIGTPHY) is RNA binding. The active-site Nucleophile is the Asp267. Positions 272–276 (TRIAR) are RNA binding; important for wobble base 34 recognition. The Zn(2+) site is built by Cys305, Cys307, Cys310, and His336.

The protein belongs to the queuine tRNA-ribosyltransferase family. In terms of assembly, homodimer. Within each dimer, one monomer is responsible for RNA recognition and catalysis, while the other monomer binds to the replacement base PreQ1. Requires Zn(2+) as cofactor.

The catalysed reaction is 7-aminomethyl-7-carbaguanine + guanosine(34) in tRNA = 7-aminomethyl-7-carbaguanosine(34) in tRNA + guanine. The protein operates within tRNA modification; tRNA-queuosine biosynthesis. In terms of biological role, catalyzes the base-exchange of a guanine (G) residue with the queuine precursor 7-aminomethyl-7-deazaguanine (PreQ1) at position 34 (anticodon wobble position) in tRNAs with GU(N) anticodons (tRNA-Asp, -Asn, -His and -Tyr). Catalysis occurs through a double-displacement mechanism. The nucleophile active site attacks the C1' of nucleotide 34 to detach the guanine base from the RNA, forming a covalent enzyme-RNA intermediate. The proton acceptor active site deprotonates the incoming PreQ1, allowing a nucleophilic attack on the C1' of the ribose to form the product. After dissociation, two additional enzymatic reactions on the tRNA convert PreQ1 to queuine (Q), resulting in the hypermodified nucleoside queuosine (7-(((4,5-cis-dihydroxy-2-cyclopenten-1-yl)amino)methyl)-7-deazaguanosine). This chain is Queuine tRNA-ribosyltransferase, found in Borrelia hermsii (strain HS1 / DAH).